The chain runs to 88 residues: Cold-regulated protein BLT14 (88 aa).

In Hordeum vulgare (Barley), this protein is Cold-regulated protein BLT14 (BLT14).